The sequence spans 260 residues: Cytochrome c oxidase subunit 2 (260 aa).

Topologically, residues 1–41 are mitochondrial intermembrane; sequence MIVREWLFFTMAPCDAAEPWQLGFQDAATPMMQGIIDLHHD. Residues 42 to 58 traverse the membrane as a helical segment; the sequence is IFFFLILILVFVSWILV. At 59–82 the chain is on the mitochondrial matrix side; that stretch reads RALWHFHYKKNPIPQRIVHGTTIE. Residues 83–104 traverse the membrane as a helical segment; that stretch reads IIRTIFPSIILMFIAIPSFALL. Topologically, residues 105-260 are mitochondrial intermembrane; the sequence is YSMDEVVVDP…NQLIPQTGEA (156 aa). Cu cation is bound by residues His-187, Cys-222, Glu-224, Cys-226, His-230, and Met-233. Glu-224 lines the Mg(2+) pocket.

Belongs to the cytochrome c oxidase subunit 2 family. In terms of assembly, component of the cytochrome c oxidase (complex IV, CIV), a multisubunit enzyme composed of a catalytic core of 3 subunits and several supernumerary subunits. The complex exists as a monomer or a dimer and forms supercomplexes (SCs) in the inner mitochondrial membrane with ubiquinol-cytochrome c oxidoreductase (cytochrome b-c1 complex, complex III, CIII). The cofactor is Cu cation.

Its subcellular location is the mitochondrion inner membrane. The catalysed reaction is 4 Fe(II)-[cytochrome c] + O2 + 8 H(+)(in) = 4 Fe(III)-[cytochrome c] + 2 H2O + 4 H(+)(out). Its function is as follows. Component of the cytochrome c oxidase, the last enzyme in the mitochondrial electron transport chain which drives oxidative phosphorylation. The respiratory chain contains 3 multisubunit complexes succinate dehydrogenase (complex II, CII), ubiquinol-cytochrome c oxidoreductase (cytochrome b-c1 complex, complex III, CIII) and cytochrome c oxidase (complex IV, CIV), that cooperate to transfer electrons derived from NADH and succinate to molecular oxygen, creating an electrochemical gradient over the inner membrane that drives transmembrane transport and the ATP synthase. Cytochrome c oxidase is the component of the respiratory chain that catalyzes the reduction of oxygen to water. Electrons originating from reduced cytochrome c in the intermembrane space (IMS) are transferred via the dinuclear copper A center (CU(A)) of subunit 2 and heme A of subunit 1 to the active site in subunit 1, a binuclear center (BNC) formed by heme A3 and copper B (CU(B)). The BNC reduces molecular oxygen to 2 water molecules using 4 electrons from cytochrome c in the IMS and 4 protons from the mitochondrial matrix. The polypeptide is Cytochrome c oxidase subunit 2 (COX2) (Beta vulgaris (Sugar beet)).